The sequence spans 179 residues: Large ribosomal subunit protein uL10 (179 aa).

It belongs to the universal ribosomal protein uL10 family. Part of the ribosomal stalk of the 50S ribosomal subunit. The N-terminus interacts with L11 and the large rRNA to form the base of the stalk. The C-terminus forms an elongated spine to which L12 dimers bind in a sequential fashion forming a multimeric L10(L12)X complex.

Functionally, forms part of the ribosomal stalk, playing a central role in the interaction of the ribosome with GTP-bound translation factors. The sequence is that of Large ribosomal subunit protein uL10 from Mycolicibacterium gilvum (strain PYR-GCK) (Mycobacterium gilvum (strain PYR-GCK)).